We begin with the raw amino-acid sequence, 181 residues long: Adenine phosphoribosyltransferase (181 aa).

The protein belongs to the purine/pyrimidine phosphoribosyltransferase family. Homodimer.

It is found in the cytoplasm. The catalysed reaction is AMP + diphosphate = 5-phospho-alpha-D-ribose 1-diphosphate + adenine. Its pathway is purine metabolism; AMP biosynthesis via salvage pathway; AMP from adenine: step 1/1. Catalyzes a salvage reaction resulting in the formation of AMP, that is energically less costly than de novo synthesis. The chain is Adenine phosphoribosyltransferase from Methylorubrum populi (strain ATCC BAA-705 / NCIMB 13946 / BJ001) (Methylobacterium populi).